The chain runs to 310 residues: Putative RING-H2 finger protein ATL53 (310 aa).

A helical membrane pass occupies residues 62 to 82 (VIAIFGIFATAFLLAAYYTLV). The RING-type; atypical zinc finger occupies 155–197 (CSICLGEFNEDESLRLLPKCNHTFHVVCIDRWLKSHSNCPLCR).

It belongs to the RING-type zinc finger family. ATL subfamily.

Its subcellular location is the membrane. It carries out the reaction S-ubiquitinyl-[E2 ubiquitin-conjugating enzyme]-L-cysteine + [acceptor protein]-L-lysine = [E2 ubiquitin-conjugating enzyme]-L-cysteine + N(6)-ubiquitinyl-[acceptor protein]-L-lysine.. It participates in protein modification; protein ubiquitination. This is Putative RING-H2 finger protein ATL53 (ATL53) from Arabidopsis thaliana (Mouse-ear cress).